The sequence spans 57 residues: Large ribosomal subunit protein bL32 (57 aa).

The segment covering Met-1–Gln-19 has biased composition (basic residues). The tract at residues Met-1 to Trp-20 is disordered.

The protein belongs to the bacterial ribosomal protein bL32 family.

This is Large ribosomal subunit protein bL32 from Mycobacterium leprae (strain Br4923).